Consider the following 339-residue polypeptide: Ubiquitin carboxyl-terminal hydrolase 50 (339 aa).

Residues 44–339 (TGLWNLGNTC…AFCKNSVTQA (296 aa)) enclose the USP domain. The active-site Nucleophile is the C53. Residue H327 is the Proton acceptor of the active site.

It belongs to the peptidase C19 family. In terms of tissue distribution, weakly expressed in a few tissues.

The protein resides in the cytoplasm. The protein localises to the cytoskeleton. Its subcellular location is the microtubule organizing center. It is found in the centrosome. It localises to the nucleus. The catalysed reaction is Thiol-dependent hydrolysis of ester, thioester, amide, peptide and isopeptide bonds formed by the C-terminal Gly of ubiquitin (a 76-residue protein attached to proteins as an intracellular targeting signal).. In terms of biological role, deubiquitinating enzyme that removes conjugated ubiquitin from specific proteins to regulate different cellular processes. Regulates the inflammasome signaling pathway by deubiquitinating 'Lys-63'-linked polyubiquitination of the PYCARD/ASC adapter protein. Regulates the ubiquitination and stability of the ACE2 protein. Acts as a negative regulator of the G2/M checkpoint pathway, by preventing serine/threonine kinase WEE1 degradation, thereby repressing entry into mitosis following activation of the G2/M DNA damage checkpoint. This Homo sapiens (Human) protein is Ubiquitin carboxyl-terminal hydrolase 50.